We begin with the raw amino-acid sequence, 234 residues long: Small ribosomal subunit protein uS2c (234 aa).

It belongs to the universal ribosomal protein uS2 family.

The protein localises to the plastid. It is found in the chloroplast. This Pinus koraiensis (Korean pine) protein is Small ribosomal subunit protein uS2c (rps2).